The chain runs to 464 residues: ATP-dependent protease ATPase subunit HslU (464 aa).

ATP contacts are provided by residues V19, 61–66, D278, E342, and R414; that span reads GVGKTE.

The protein belongs to the ClpX chaperone family. HslU subfamily. As to quaternary structure, a double ring-shaped homohexamer of HslV is capped on each side by a ring-shaped HslU homohexamer. The assembly of the HslU/HslV complex is dependent on binding of ATP.

It localises to the cytoplasm. Its function is as follows. ATPase subunit of a proteasome-like degradation complex; this subunit has chaperone activity. The binding of ATP and its subsequent hydrolysis by HslU are essential for unfolding of protein substrates subsequently hydrolyzed by HslV. HslU recognizes the N-terminal part of its protein substrates and unfolds these before they are guided to HslV for hydrolysis. The sequence is that of ATP-dependent protease ATPase subunit HslU from Halalkalibacterium halodurans (strain ATCC BAA-125 / DSM 18197 / FERM 7344 / JCM 9153 / C-125) (Bacillus halodurans).